The chain runs to 487 residues: WD repeat, SAM and U-box domain-containing protein 1 (487 aa).

WD repeat units follow at residues 10-47 (SHRD…ELPF), 52-93 (GHGY…AVLE), 95-134 (PGRS…LRRT), 137-176 (VNDT…LHAE), 179-227 (AHDL…SAGI), 237-276 (GQSA…LLYT), and 279-318 (QHDR…SAQG). Residues 347–411 (WSEEEVLAWL…MKKIEELKMV (65 aa)) form the SAM domain. The U-box domain maps to 416 to 487 (GTPDEFLCPI…MAIFRWSTSQ (72 aa)).

This Danio rerio (Zebrafish) protein is WD repeat, SAM and U-box domain-containing protein 1 (wdsub1).